We begin with the raw amino-acid sequence, 35 residues long: MVEVLLTGIVLGSIFITLLGLLAAAKLQYNRKKTN.

A helical transmembrane segment spans residues 5–25; the sequence is LLTGIVLGSIFITLLGLLAAA.

This sequence belongs to the PetG family. As to quaternary structure, the 4 large subunits of the cytochrome b6-f complex are cytochrome b6, subunit IV (17 kDa polypeptide, PetD), cytochrome f and the Rieske protein, while the 4 small subunits are PetG, PetL, PetM and PetN. The complex functions as a dimer.

The protein resides in the plastid. Its subcellular location is the chloroplast thylakoid membrane. Its function is as follows. Component of the cytochrome b6-f complex, which mediates electron transfer between photosystem II (PSII) and photosystem I (PSI), cyclic electron flow around PSI, and state transitions. PetG is required for either the stability or assembly of the cytochrome b6-f complex. The sequence is that of Cytochrome b6-f complex subunit 5 from Cyanidium caldarium (Red alga).